The following is a 70-amino-acid chain: MQVLVRDNNVDQALRALKKKMQREGIFREMKMRDFYEKPSQKRAREKAEAVRRVRKLARKRAQREGIVAR.

Belongs to the bacterial ribosomal protein bS21 family.

The chain is Small ribosomal subunit protein bS21B (rpsU2) from Rhizobium meliloti (strain 1021) (Ensifer meliloti).